The sequence spans 621 residues: E3 SUMO-protein ligase PIAS2 (621 aa).

In terms of domain architecture, SAP spans 11–45 (VSSFRVSELQVLLGFAGRNKSGRKHDLLMRALHLL). An LXXLL motif motif is present at residues 19-23 (LQVLL). Residues Lys46 and Lys249 each participate in a glycyl lysine isopeptide (Lys-Gly) (interchain with G-Cter in SUMO2) cross-link. The PINIT domain maps to 134–299 (QPSPPIPPVH…SMSVYLVRQL (166 aa)). An SP-RING-type zinc finger spans residues 331 to 412 (PDSEIATTSL…FMEILNDCSD (82 aa)). Zn(2+) contacts are provided by Cys362, His364, Cys385, and Cys388. Glycyl lysine isopeptide (Lys-Gly) (interchain with G-Cter in SUMO2) cross-links involve residues Lys430, Lys435, Lys443, and Lys452. The SUMO1-binding stretch occupies residues 467–473 (IDVIDLT). 3 positions are modified to phosphoserine: Ser476, Ser477, and Ser478. The Nuclear localization signal signature appears at 484 to 492 (PPAKRKCIF). A Glycyl lysine isopeptide (Lys-Gly) (interchain with G-Cter in SUMO2) cross-link involves residue Lys489. Residue Ser499 is modified to Phosphoserine. Lys502 participates in a covalent cross-link: Glycyl lysine isopeptide (Lys-Gly) (interchain with G-Cter in SUMO2). Residues 577–610 (TASSTSVTTTSPHESSTHVSSSSSRSETGVITSS) show a composition bias toward low complexity. The segment at 577 to 621 (TASSTSVTTTSPHESSTHVSSSSSRSETGVITSSGRNIPDIISLD) is disordered.

The protein belongs to the PIAS family. As to quaternary structure, binds SUMO1 and UBE2I. Interacts with AXIN1, JUN, MDM2, PARK7, TP53 and TP73 isoform alpha, but not TP73 isoform beta. Interacts with STAT4 following IL12 and IFN-alpha stimulation of T-cells. Interacts also with GTF2I, GTF2IRD1, IKFZ1, DAB2 and MSX2, as well as with several steroid receptors, including ESR1, ESR2, NR3C1, PGR, AR, and with NCOA2. Sumoylation of a target protein seems to enhance the interaction. Binds to sumoylated ELK1. Interacts with PLAG1. Binds DNA, such as CDKN1A promoter, in a sequence-specific manner. Interacts with KLF8; the interaction results in SUMO ligation and repression of KLF8 transcriptional activity and of its cell cycle progression into G(1) phase. Interacts with IFIH1/MDA5. Interacts with PML. Interacts with PRDM1. Sumoylated.

Its subcellular location is the nucleus speckle. It localises to the nucleus. The protein localises to the PML body. The enzyme catalyses S-ubiquitinyl-[E2 ubiquitin-conjugating enzyme]-L-cysteine + [acceptor protein]-L-lysine = [E2 ubiquitin-conjugating enzyme]-L-cysteine + N(6)-ubiquitinyl-[acceptor protein]-L-lysine.. It functions in the pathway protein modification; protein sumoylation. In terms of biological role, functions as an E3-type small ubiquitin-like modifier (SUMO) ligase, stabilizing the interaction between UBE2I and the substrate, and as a SUMO-tethering factor. Plays a crucial role as a transcriptional coregulation in various cellular pathways, including the STAT pathway, the p53 pathway and the steroid hormone signaling pathway. The effects of this transcriptional coregulation, transactivation or silencing may vary depending upon the biological context and PIAS2 isoform studied. However, it seems to be mostly involved in gene silencing. Binds to sumoylated ELK1 and enhances its transcriptional activity by preventing recruitment of HDAC2 by ELK1, thus reversing SUMO-mediated repression of ELK1 transactivation activity. Isoform PIASx-beta, but not isoform PIASx-alpha, promotes MDM2 sumoylation. Isoform PIASx-alpha promotes PARK7 sumoylation. Isoform PIASx-beta promotes NCOA2 sumoylation more efficiently than isoform PIASx-alpha. Sumoylates PML at'Lys-65' and 'Lys-160'. In Mus musculus (Mouse), this protein is E3 SUMO-protein ligase PIAS2 (Pias2).